Reading from the N-terminus, the 492-residue chain is Signal transduction histidine-protein kinase/phosphatase MprB (492 aa).

Residues 1–27 are Cytoplasmic-facing; the sequence is MAFPPNSWRPTGPLPTSSLSLRWRVMM. A helical transmembrane segment spans residues 28–48; it reads LAMSMVALVVVLMAVAVYAVV. Residues 49-165 are Extracellular-facing; it reads SRALYDDLDN…TVQVLRRLGT (117 aa). Residues 166–186 traverse the membrane as a helical segment; the sequence is VLLIVGGIGVAVAAIAGGAVA. The HAMP domain occupies 187–239; the sequence is RAGLRPVGRLTEAAERVARTDDLRPIPVVGSDELARLTEAFNMMLRALAESRE. At 187 to 492 the chain is on the cytoplasmic side; sequence RAGLRPVGRL…DRGGHTVATE (306 aa). One can recognise a Histidine kinase domain in the interval 247 to 467; that stretch reads DAGHELRTPL…SVHMLLPGQR (221 aa). H250 carries the phosphohistidine; by autocatalysis modification. The disordered stretch occupies residues 470 to 492; that stretch reads DPGATRSAEGFVDDRGGHTVATE.

Requires Mg(2+) as cofactor. Mn(2+) serves as cofactor. Post-translationally, autophosphorylated.

Its subcellular location is the cell membrane. It carries out the reaction ATP + protein L-histidine = ADP + protein N-phospho-L-histidine.. In terms of biological role, member of the two-component regulatory system MprB/MprA which contributes to maintaining a balance among several systems involved in stress resistance and is required for establishment and maintenance of persistent infection in the host. In response to environmental signals MprB acts both as a membrane-associated protein kinase that undergoes autophosphorylation and subsequently transfers the phosphate to MprA, and a protein phosphatase that dephosphorylates phospho-MprA. The protein is Signal transduction histidine-protein kinase/phosphatase MprB (mprB) of Mycolicibacterium smegmatis (strain ATCC 700084 / mc(2)155) (Mycobacterium smegmatis).